We begin with the raw amino-acid sequence, 288 residues long: ATP synthase gamma chain (288 aa).

It belongs to the ATPase gamma chain family. As to quaternary structure, F-type ATPases have 2 components, CF(1) - the catalytic core - and CF(0) - the membrane proton channel. CF(1) has five subunits: alpha(3), beta(3), gamma(1), delta(1), epsilon(1). CF(0) has three main subunits: a, b and c.

It localises to the cell inner membrane. Produces ATP from ADP in the presence of a proton gradient across the membrane. The gamma chain is believed to be important in regulating ATPase activity and the flow of protons through the CF(0) complex. The protein is ATP synthase gamma chain of Actinobacillus pleuropneumoniae serotype 3 (strain JL03).